A 3184-amino-acid chain; its full sequence is WD repeat- and FYVE domain-containing protein 4 (3184 aa).

Over residues 1–18 (MEAEDLSKAEDRNEDPGS) the composition is skewed to basic and acidic residues. Disordered stretches follow at residues 1–39 (MEAE…QSSS), 944–993 (SHTH…QDST), 1837–1869 (VGAE…KAHP), and 2309–2335 (ALSS…NQDE). Positions 981–993 (QAPQPLGESQDST) are enriched in polar residues. Basic and acidic residues predominate over residues 2314 to 2324 (RHKESQDKNDH). Residues 2385-2510 (LDKEKVTQKF…DRSKAFKSFC (126 aa)) enclose the BEACH-type PH domain. A BEACH domain is found at 2527 to 2821 (SLRRYPGSDR…QLFTKPHPAR (295 aa)). WD repeat units lie at residues 2863–2922 (MYLF…YGSD), 2923–2972 (KVLM…PRGL), 2973–3014 (RLRQ…LDHL), 3015–3057 (THVT…GQPL), 3058–3141 (ASIT…ELDV), and 3142–3184 (SIAL…SADG). The tract at residues 3107–3128 (SVPGRPAGEEPPAQPPSPRGHK) is disordered.

As to quaternary structure, interacts with HSP90AB1.

Its subcellular location is the early endosome. It localises to the endoplasmic reticulum. In terms of biological role, plays a critical role in the regulation of cDC1-mediated cross-presentation of viral and tumor antigens in dendritic cells. Mechanistically, acts near the plasma membrane and interacts with endosomal membranes to promote endosomal-to-cytosol antigen trafficking. Also plays a role in B-cell survival through regulation of autophagy. This chain is WD repeat- and FYVE domain-containing protein 4 (WDFY4), found in Homo sapiens (Human).